Consider the following 351-residue polypeptide: Dihydroorotate dehydrogenase (quinone) (351 aa).

FMN contacts are provided by residues 61 to 65 (AGLDK) and T85. A substrate-binding site is contributed by K65. 110-114 (NRMGF) provides a ligand contact to substrate. Positions 139 and 172 each coordinate FMN. Position 172 (N172) interacts with substrate. Catalysis depends on S175, which acts as the Nucleophile. Substrate is bound at residue N177. The FMN site is built by K217 and T245. 246-247 (NT) serves as a coordination point for substrate. FMN-binding positions include G268, G297, and 318–319 (YS).

The protein belongs to the dihydroorotate dehydrogenase family. Type 2 subfamily. In terms of assembly, monomer. It depends on FMN as a cofactor.

Its subcellular location is the cell membrane. The enzyme catalyses (S)-dihydroorotate + a quinone = orotate + a quinol. The protein operates within pyrimidine metabolism; UMP biosynthesis via de novo pathway; orotate from (S)-dihydroorotate (quinone route): step 1/1. In terms of biological role, catalyzes the conversion of dihydroorotate to orotate with quinone as electron acceptor. The protein is Dihydroorotate dehydrogenase (quinone) of Xanthomonas oryzae pv. oryzae (strain MAFF 311018).